Here is a 217-residue protein sequence, read N- to C-terminus: Ras-like protein (217 aa).

Residue 17-24 (GGGGVGKS) participates in GTP binding. The Effector region signature appears at 39 to 47 (YDPTIEDSY). Residues 64 to 68 (DTAGQ) and 123 to 126 (NKCD) contribute to the GTP site. Residues 181-200 (TGRMMTGGGGGGPPGTYAGK) are disordered. Positions 185–194 (MTGGGGGGPP) are enriched in gly residues. 2 S-palmitoyl cysteine lipidation sites follow: cysteine 210 and cysteine 211. Residue cysteine 214 is modified to Cysteine methyl ester. Cysteine 214 carries the S-geranylgeranyl cysteine lipid modification. A propeptide spans 215 to 217 (VVL) (removed in mature form).

It belongs to the small GTPase superfamily. Ras family.

It is found in the cell membrane. The enzyme catalyses GTP + H2O = GDP + phosphate + H(+). Alternates between an inactive form bound to GDP and an active form bound to GTP. Activated by a guanine nucleotide-exchange factor (GEF) and inactivated by a GTPase-activating protein (GAP). The sequence is that of Ras-like protein from Lentinula edodes (Shiitake mushroom).